A 214-amino-acid chain; its full sequence is Putative germin-like protein 9-2 (214 aa).

An N-terminal signal peptide occupies residues 1–25 (MALSYYSLLLLLLAVWAPALTLVMA). Asn-44 and Asn-60 each carry an N-linked (GlcNAc...) asparagine glycan. Residues 56-202 (RKVFNTSSAP…SFKTDVPTIL (147 aa)) enclose the Cupin type-1 domain. Residues His-104, His-106, Glu-111, and His-150 each contribute to the Mn(2+) site.

It belongs to the germin family. As to quaternary structure, oligomer (believed to be a pentamer but probably hexamer).

The protein resides in the secreted. It is found in the extracellular space. Its subcellular location is the apoplast. In terms of biological role, may play a role in plant defense. Probably has no oxalate oxidase activity even if the active site is conserved. This chain is Putative germin-like protein 9-2, found in Oryza sativa subsp. japonica (Rice).